The chain runs to 159 residues: Protein-export protein SecB (159 aa).

This sequence belongs to the SecB family. In terms of assembly, homotetramer, a dimer of dimers. One homotetramer interacts with 1 SecA dimer.

The protein resides in the cytoplasm. Its function is as follows. One of the proteins required for the normal export of preproteins out of the cell cytoplasm. It is a molecular chaperone that binds to a subset of precursor proteins, maintaining them in a translocation-competent state. It also specifically binds to its receptor SecA. This is Protein-export protein SecB from Rhizobium etli (strain CIAT 652).